A 176-amino-acid polypeptide reads, in one-letter code: N,N-dimethyl phenylurea N-demethylase subunit beta (176 aa).

It belongs to the bacterial ring-hydroxylating dioxygenase beta subunit family. PdmA (subunit alpha) and PdmB (subunit beta) form the oxygenase component of a bacterial Rieske non-heme iron oxygenase (RO) system.

It catalyses the reaction a 1,1-dimethyl-3-phenylurea + 2 reduced [2Fe-2S]-[ferredoxin] + O2 + 2 H(+) = a 1-methyl-3-phenylurea + formaldehyde + 2 oxidized [2Fe-2S]-[ferredoxin] + H2O. The catalysed reaction is isoproturon + 2 reduced [2Fe-2S]-[ferredoxin] + O2 + 2 H(+) = 1-methyl-3-[4-(propan-2-yl)phenyl]urea + formaldehyde + 2 oxidized [2Fe-2S]-[ferredoxin] + H2O. It carries out the reaction chlorotoluron + 2 reduced [2Fe-2S]-[ferredoxin] + O2 + 2 H(+) = 3-(3-chloro-4-methylphenyl)-1-methylurea + formaldehyde + 2 oxidized [2Fe-2S]-[ferredoxin] + H2O. The enzyme catalyses metoxuron + 2 reduced [2Fe-2S]-[ferredoxin] + O2 + 2 H(+) = 3-(3-chloro-4-methoxylphenyl)-1-methylurea + formaldehyde + 2 oxidized [2Fe-2S]-[ferredoxin] + H2O. It catalyses the reaction monuron + 2 reduced [2Fe-2S]-[ferredoxin] + O2 + 2 H(+) = 3-(4-chlorophenyl)-1-methylurea + formaldehyde + 2 oxidized [2Fe-2S]-[ferredoxin] + H2O. The catalysed reaction is diuron + 2 reduced [2Fe-2S]-[ferredoxin] + O2 + 2 H(+) = 3-(3,4-dichlorophenyl)-1-methylurea + formaldehyde + 2 oxidized [2Fe-2S]-[ferredoxin] + H2O. It carries out the reaction fluometuron + 2 reduced [2Fe-2S]-[ferredoxin] + O2 + 2 H(+) = 3-[3-(trifluoromethyl)phenyl]-1-methylurea + formaldehyde + 2 oxidized [2Fe-2S]-[ferredoxin] + H2O. The enzyme catalyses fenuron + 2 reduced [2Fe-2S]-[ferredoxin] + O2 + 2 H(+) = 1-methyl-3-phenylurea + formaldehyde + 2 oxidized [2Fe-2S]-[ferredoxin] + H2O. It participates in xenobiotic degradation. With respect to regulation, activity is stimulated in vitro by coexpression of a [3Fe-4S]-type ferredoxin. Functionally, part of the multicomponent N,N-dimethyl phenylurea N-demethylase responsible for the initial N-demethylation step during the bacterial metabolism of N,N-dimethyl-substituted phenylurea herbicides. Catalyzes the mono-N-demethylation of N,N-dimethyl-substituted phenylurea herbicides to their mono-N-demethylated derivatives. Is active on isoproturon (IPU), chlorotoluron, metoxuron, monoron, diuron, fluometuron and fenuron, but cannot transform the N-methoxy-N-methyl-substituted herbicides. In Sphingobium sp. (strain YBL2), this protein is N,N-dimethyl phenylurea N-demethylase subunit beta.